Consider the following 784-residue polypeptide: LPS-assembly protein LptD (784 aa).

Residues 1–24 (MKKRIPTLLATMIATALYSQQGLA) form the signal peptide. 2 disulfide bridges follow: cysteine 31–cysteine 724 and cysteine 173–cysteine 725.

Belongs to the LptD family. In terms of assembly, component of the lipopolysaccharide transport and assembly complex. Interacts with LptE and LptA. In terms of processing, contains two intramolecular disulfide bonds.

It is found in the cell outer membrane. Its function is as follows. Together with LptE, is involved in the assembly of lipopolysaccharide (LPS) at the surface of the outer membrane. The chain is LPS-assembly protein LptD from Escherichia coli O6:K15:H31 (strain 536 / UPEC).